Here is a 207-residue protein sequence, read N- to C-terminus: dTTP/UTP pyrophosphatase (207 aa).

The active-site Proton acceptor is the D86.

This sequence belongs to the Maf family. YhdE subfamily. The cofactor is a divalent metal cation.

It localises to the cytoplasm. It carries out the reaction dTTP + H2O = dTMP + diphosphate + H(+). The enzyme catalyses UTP + H2O = UMP + diphosphate + H(+). In terms of biological role, nucleoside triphosphate pyrophosphatase that hydrolyzes dTTP and UTP. May have a dual role in cell division arrest and in preventing the incorporation of modified nucleotides into cellular nucleic acids. In Nitrosospira multiformis (strain ATCC 25196 / NCIMB 11849 / C 71), this protein is dTTP/UTP pyrophosphatase.